We begin with the raw amino-acid sequence, 397 residues long: Lysophospholipid transporter LplT (397 aa).

11 helical membrane-spanning segments follow: residues 16 to 36 (MLAV…LLFA), 53 to 73 (VLQM…GQFA), 91 to 111 (LGAG…LVGI), 139 to 159 (LMES…GILA), 164 to 184 (LAAL…NLWI), 227 to 247 (LFWG…PVAL), 253 to 273 (AMPT…AGAA), 281 to 301 (TVSR…AFAV), 305 to 325 (LLPA…FIVP), 352 to 372 (NVAM…GVPP), and 373 to 393 (VAVG…LWVW).

It belongs to the major facilitator superfamily. LplT (TC 2.A.1.42) family.

Its subcellular location is the cell inner membrane. Catalyzes the facilitated diffusion of 2-acyl-glycero-3-phosphoethanolamine (2-acyl-GPE) into the cell. This is Lysophospholipid transporter LplT from Klebsiella pneumoniae (strain 342).